The following is a 105-amino-acid chain: MVGQRIRIRLKAYDYRVLDTSTGEIVDTAKRTGAQVAGPIPLPTVKNKYCVLRSPHVDKKSREAFEIRTHKRLIDILEPTQQTVDALMRLDLPAGVDVEIKAFEK.

The protein belongs to the universal ribosomal protein uS10 family. In terms of assembly, part of the 30S ribosomal subunit.

Involved in the binding of tRNA to the ribosomes. The protein is Small ribosomal subunit protein uS10 of Acidobacterium capsulatum (strain ATCC 51196 / DSM 11244 / BCRC 80197 / JCM 7670 / NBRC 15755 / NCIMB 13165 / 161).